The chain runs to 180 residues: Protein SPMIP9 (180 aa).

As to quaternary structure, microtubule inner protein component of sperm flagellar doublet microtubules.

The protein localises to the nucleus. Its subcellular location is the cytoplasm. It localises to the cytoskeleton. It is found in the flagellum axoneme. Microtubule inner protein (MIP) part of the dynein-decorated doublet microtubules (DMTs) in flagella axoneme. This chain is Protein SPMIP9 (SPMIP9), found in Bos taurus (Bovine).